A 531-amino-acid polypeptide reads, in one-letter code: tRNA(Ile)-lysidine synthase (531 aa).

Residue 32–37 participates in ATP binding; it reads SGGMDS.

It belongs to the tRNA(Ile)-lysidine synthase family.

It localises to the cytoplasm. It catalyses the reaction cytidine(34) in tRNA(Ile2) + L-lysine + ATP = lysidine(34) in tRNA(Ile2) + AMP + diphosphate + H(+). In terms of biological role, ligates lysine onto the cytidine present at position 34 of the AUA codon-specific tRNA(Ile) that contains the anticodon CAU, in an ATP-dependent manner. Cytidine is converted to lysidine, thus changing the amino acid specificity of the tRNA from methionine to isoleucine. The chain is tRNA(Ile)-lysidine synthase from Blochmanniella floridana.